Consider the following 298-residue polypeptide: Iron-regulated virulence regulatory protein IrgB (298 aa).

The region spanning 1–59 (MQDLSAVKAFHALCQHKSLTAAAKALEQPKSTLSRRLAQLEEDLGQSLLMRQGNRLTLT) is the HTH lysR-type domain. Residues 19–38 (LTAAAKALEQPKSTLSRRLA) constitute a DNA-binding region (H-T-H motif).

Belongs to the LysR transcriptional regulatory family.

Its function is as follows. Transcription activation of the irgA gene. In the presence of sufficient iron, transcription of both irgA and irgB is negatively regulated by a fur-like protein. In low iron conditions, negative regulation of transcription is removed, and production of irgB leads to positive transcriptional activation of irgA. The polypeptide is Iron-regulated virulence regulatory protein IrgB (irgB) (Vibrio cholerae serotype O1 (strain ATCC 39315 / El Tor Inaba N16961)).